Reading from the N-terminus, the 146-residue chain is Holo-[acyl-carrier-protein] synthase (146 aa).

The Mg(2+) site is built by aspartate 9 and glutamate 63.

This sequence belongs to the P-Pant transferase superfamily. AcpS family. The cofactor is Mg(2+).

The protein resides in the cytoplasm. It carries out the reaction apo-[ACP] + CoA = holo-[ACP] + adenosine 3',5'-bisphosphate + H(+). In terms of biological role, transfers the 4'-phosphopantetheine moiety from coenzyme A to a Ser of acyl-carrier-protein. The polypeptide is Holo-[acyl-carrier-protein] synthase (Burkholderia orbicola (strain MC0-3)).